The following is a 180-amino-acid chain: MKNFYDWIKEFVRDQGEFIAQQSGWLELERSSYAKLIAQTISHVLNGGSLLVSADSSRHWFLNYILSNLNPKDLKERPLLSVIDFNASSFYPKNDANLSLATIEMTYQNPMFWHVGKIENEGLKTILLSKIPSFLWLFEELKEDCLLLKEHDSLLDYKLLQLFKLFENALFSVLYNKVTL.

Positions 17, 27, 140, 143, and 176 each coordinate Ca(2+).

Forms dimers and homotetramers. Interacts with domains I and II (residues 1-112) of DnaA. In a crystal with domains I and II of DnaA HobA forms tetramers with DnaA fragments bound at the dimer interface of the tetramer. It depends on Ca(2+) as a cofactor.

Functionally, required for DNA replication initiation. Increases binding of DnaA to oriC region. This is DNA replication regulator protein HobA from Helicobacter pylori (strain ATCC 700392 / 26695) (Campylobacter pylori).